The primary structure comprises 302 residues: Dihydroorotate dehydrogenase B (NAD(+)), catalytic subunit (302 aa).

FMN is bound by residues Ser-20 and 44–45 (KG). Residues Lys-44 and 68-72 (NSVGL) contribute to the substrate site. Residues Asn-98 and Asn-125 each coordinate FMN. A substrate-binding site is contributed by Asn-125. Cys-128 functions as the Nucleophile in the catalytic mechanism. Residues Lys-163 and Ile-189 each coordinate FMN. 190–191 (NT) serves as a coordination point for substrate. FMN is bound by residues Gly-215, 241–242 (GG), and 263–264 (GT).

This sequence belongs to the dihydroorotate dehydrogenase family. Type 1 subfamily. In terms of assembly, heterotetramer of 2 PyrK and 2 PyrD type B subunits. The cofactor is FMN.

The protein localises to the cytoplasm. The catalysed reaction is (S)-dihydroorotate + NAD(+) = orotate + NADH + H(+). The protein operates within pyrimidine metabolism; UMP biosynthesis via de novo pathway; orotate from (S)-dihydroorotate (NAD(+) route): step 1/1. Functionally, catalyzes the conversion of dihydroorotate to orotate with NAD(+) as electron acceptor. The sequence is that of Dihydroorotate dehydrogenase B (NAD(+)), catalytic subunit (pyrD) from Thermoanaerobacter pseudethanolicus (strain ATCC 33223 / 39E) (Clostridium thermohydrosulfuricum).